Consider the following 153-residue polypeptide: Ribosome maturation factor RimP (153 aa).

The protein belongs to the RimP family.

It is found in the cytoplasm. Functionally, required for maturation of 30S ribosomal subunits. This is Ribosome maturation factor RimP from Solibacter usitatus (strain Ellin6076).